Reading from the N-terminus, the 122-residue chain is Urease subunit beta (122 aa).

Residues 92-122 form a disordered region; sequence GLRPEYAGELDGRGHEPTAPNYGEKGQGHFE.

The protein belongs to the urease beta subunit family. As to quaternary structure, heterotrimer of UreA (gamma), UreB (beta) and UreC (alpha) subunits. Three heterotrimers associate to form the active enzyme.

The protein resides in the cytoplasm. The catalysed reaction is urea + 2 H2O + H(+) = hydrogencarbonate + 2 NH4(+). It participates in nitrogen metabolism; urea degradation; CO(2) and NH(3) from urea (urease route): step 1/1. The polypeptide is Urease subunit beta (Saccharopolyspora erythraea (strain ATCC 11635 / DSM 40517 / JCM 4748 / NBRC 13426 / NCIMB 8594 / NRRL 2338)).